The primary structure comprises 160 residues: Protein-export protein SecB (160 aa).

The protein belongs to the SecB family. Homotetramer, a dimer of dimers. One homotetramer interacts with 1 SecA dimer.

The protein localises to the cytoplasm. One of the proteins required for the normal export of preproteins out of the cell cytoplasm. It is a molecular chaperone that binds to a subset of precursor proteins, maintaining them in a translocation-competent state. It also specifically binds to its receptor SecA. This chain is Protein-export protein SecB, found in Beijerinckia indica subsp. indica (strain ATCC 9039 / DSM 1715 / NCIMB 8712).